The chain runs to 273 residues: Putative pyruvate, phosphate dikinase regulatory protein (273 aa).

151-158 (GVSRTSKT) lines the ADP pocket.

Belongs to the pyruvate, phosphate/water dikinase regulatory protein family. PDRP subfamily.

It catalyses the reaction N(tele)-phospho-L-histidyl/L-threonyl-[pyruvate, phosphate dikinase] + ADP = N(tele)-phospho-L-histidyl/O-phospho-L-threonyl-[pyruvate, phosphate dikinase] + AMP + H(+). The catalysed reaction is N(tele)-phospho-L-histidyl/O-phospho-L-threonyl-[pyruvate, phosphate dikinase] + phosphate + H(+) = N(tele)-phospho-L-histidyl/L-threonyl-[pyruvate, phosphate dikinase] + diphosphate. Its function is as follows. Bifunctional serine/threonine kinase and phosphorylase involved in the regulation of the pyruvate, phosphate dikinase (PPDK) by catalyzing its phosphorylation/dephosphorylation. The protein is Putative pyruvate, phosphate dikinase regulatory protein of Desulfitobacterium hafniense (strain DSM 10664 / DCB-2).